The primary structure comprises 157 residues: Protein EOLA1 (157 aa).

One can recognise an ASCH domain in the interval 6–92; it reads LSFRQPYAGL…IAGLIDIGET (87 aa).

It belongs to the EOLA family. As to quaternary structure, interacts with MT2A.

Its function is as follows. May play a role in cell protection during the inflammatory response. In epithelial cells, negatively regulates IL6 production and apoptosis through the regulation of MT2A expression. The protein is Protein EOLA1 of Mus musculus (Mouse).